Reading from the N-terminus, the 245-residue chain is LOB domain-containing protein 16 (245 aa).

In terms of domain architecture, LOB spans 14–116 (SPCGACKFLR…SQVMQMKAQI (103 aa)). The interval 162–183 (YYGHVNPNNPVSPQSSLEESFS) is disordered.

The protein belongs to the LOB domain-containing protein family. In terms of assembly, homodimer and heterodimer with LBD18. Expressed in roots and faintly in shoots.

The protein resides in the nucleus. Functionally, transcriptional activator. Involved in lateral root formation. Regulated by the transcriptional activators ARF7 and ARF19. Functions in the initiation and emergence of lateral roots, in conjunction with LBD18, downstream of ARF7 and ARF19. Acts downstream of the auxin influx carriers AUX1 and LAX1 in the regulation of lateral root initiation and development. This chain is LOB domain-containing protein 16 (LBD16), found in Arabidopsis thaliana (Mouse-ear cress).